Reading from the N-terminus, the 298-residue chain is Ketohexokinase (298 aa).

The beta-D-fructose site is built by Asp-15, Gly-41, Asn-42, and Asn-45. ATP-binding positions include Arg-108, 226–229 (AEEG), and 255–258 (GAGD). Asp-258 is a beta-D-fructose binding site.

The protein belongs to the carbohydrate kinase PfkB family. Homodimer. In terms of tissue distribution, most abundant in liver, kidney, gut, spleen and pancreas. Low levels also found in adrenal, muscle, brain and eye.

It carries out the reaction beta-D-fructose + ATP = beta-D-fructose 1-phosphate + ADP + H(+). Its pathway is carbohydrate metabolism; fructose metabolism. Its activity is regulated as follows. Requires potassium. Inhibition by ADP. Catalyzes the phosphorylation of the ketose sugar fructose to fructose-1-phosphate. The polypeptide is Ketohexokinase (Homo sapiens (Human)).